A 167-amino-acid chain; its full sequence is Small ribosomal subunit protein uS9 (167 aa).

A disordered region spans residues 136-167; sequence KRAGFLTRDPRATERKKYGLKKARKAPQYSKR. Over residues 143–152 the composition is skewed to basic and acidic residues; it reads RDPRATERKK. Residues 153 to 167 show a composition bias toward basic residues; it reads YGLKKARKAPQYSKR.

It belongs to the universal ribosomal protein uS9 family.

In Nocardia farcinica (strain IFM 10152), this protein is Small ribosomal subunit protein uS9.